The primary structure comprises 172 residues: Inorganic pyrophosphatase (172 aa).

Substrate contacts are provided by Lys28, Arg42, and Tyr54. Residues Asp64, Asp69, and Asp101 each coordinate Mg(2+). Tyr140 serves as a coordination point for substrate.

This sequence belongs to the PPase family. Homohexamer. The cofactor is Mg(2+).

The protein resides in the cytoplasm. It carries out the reaction diphosphate + H2O = 2 phosphate + H(+). In terms of biological role, catalyzes the hydrolysis of inorganic pyrophosphate (PPi) forming two phosphate ions. The polypeptide is Inorganic pyrophosphatase (Campylobacter jejuni subsp. jejuni serotype O:2 (strain ATCC 700819 / NCTC 11168)).